Here is a 405-residue protein sequence, read N- to C-terminus: MENIMTLPKIKQVRAWFTGGATAEKGAGGGDYHDQGANHWIDDHIATPMSKYRDYEQSRQSFGINVLGTLVVEVEAENGQTGFAVSTAGEMGCFIVEKHLNRFIEGKCVSDIKLIHDQMLSATLYYSGSGGLVMNTISCVDLALWDLFGKVVGLPVYKLLGGAVRDEIQFYATGARPDLAKEMGFIGGKMPTHWGPHDGDAGIRKDAAMVADMREKCGEDFWLMLDCWMSQDVNYATKLAHACAPYNLKWIEECLPPQQYEGYRELKRNAPVGMMVTSGEHHGTLQSFRTLSETGIDIMQPDVGWCGGLTTLVEIAAIAKSRGQLVVPHGSSVYSHHAVITFTNTPFSEFLMTSPDCSTMRPQFDPILLNEPVPVNGRIHKSVLDKPGFGVELNRDCNLKRPYSH.

The substrate site is built by His33 and Arg59. Positions 226, 252, and 280 each coordinate Mg(2+). The active-site Proton acceptor is His329. Substrate is bound at residue Glu349.

The protein belongs to the mandelate racemase/muconate lactonizing enzyme family. RhamD subfamily. In terms of assembly, homooctamer; tetramer of dimers. Mg(2+) is required as a cofactor.

It catalyses the reaction L-rhamnonate = 2-dehydro-3-deoxy-L-rhamnonate + H2O. Catalyzes the dehydration of L-rhamnonate to 2-keto-3-deoxy-L-rhamnonate (KDR). The chain is L-rhamnonate dehydratase from Escherichia coli O9:H4 (strain HS).